We begin with the raw amino-acid sequence, 303 residues long: Succinate--CoA ligase [ADP-forming] subunit alpha (303 aa).

CoA-binding positions include 20 to 23, Lys-46, and 108 to 110; these read TGSE and ITE. Tyr-173 contacts substrate. The active-site Tele-phosphohistidine intermediate is the His-259.

This sequence belongs to the succinate/malate CoA ligase alpha subunit family. As to quaternary structure, heterotetramer of two alpha and two beta subunits.

It carries out the reaction succinate + ATP + CoA = succinyl-CoA + ADP + phosphate. The enzyme catalyses GTP + succinate + CoA = succinyl-CoA + GDP + phosphate. Its pathway is carbohydrate metabolism; tricarboxylic acid cycle; succinate from succinyl-CoA (ligase route): step 1/1. In terms of biological role, succinyl-CoA synthetase functions in the citric acid cycle (TCA), coupling the hydrolysis of succinyl-CoA to the synthesis of either ATP or GTP and thus represents the only step of substrate-level phosphorylation in the TCA. The alpha subunit of the enzyme binds the substrates coenzyme A and phosphate, while succinate binding and nucleotide specificity is provided by the beta subunit. In Mycobacterium tuberculosis (strain CDC 1551 / Oshkosh), this protein is Succinate--CoA ligase [ADP-forming] subunit alpha.